The primary structure comprises 270 residues: Thiazole synthase (270 aa).

The active-site Schiff-base intermediate with DXP is the lysine 111. Residues glycine 172, 198–199 (AG), and 220–221 (NT) contribute to the 1-deoxy-D-xylulose 5-phosphate site.

The protein belongs to the ThiG family. As to quaternary structure, homotetramer. Forms heterodimers with either ThiH or ThiS.

It is found in the cytoplasm. It catalyses the reaction [ThiS sulfur-carrier protein]-C-terminal-Gly-aminoethanethioate + 2-iminoacetate + 1-deoxy-D-xylulose 5-phosphate = [ThiS sulfur-carrier protein]-C-terminal Gly-Gly + 2-[(2R,5Z)-2-carboxy-4-methylthiazol-5(2H)-ylidene]ethyl phosphate + 2 H2O + H(+). It participates in cofactor biosynthesis; thiamine diphosphate biosynthesis. In terms of biological role, catalyzes the rearrangement of 1-deoxy-D-xylulose 5-phosphate (DXP) to produce the thiazole phosphate moiety of thiamine. Sulfur is provided by the thiocarboxylate moiety of the carrier protein ThiS. In vitro, sulfur can be provided by H(2)S. In Methylococcus capsulatus (strain ATCC 33009 / NCIMB 11132 / Bath), this protein is Thiazole synthase.